We begin with the raw amino-acid sequence, 309 residues long: Homoserine O-acetyltransferase (309 aa).

Cys-142 serves as the catalytic Acyl-thioester intermediate. Substrate is bound by residues Lys-163 and Ser-192. The active-site Proton acceptor is the His-235. The active site involves Glu-237. Arg-249 lines the substrate pocket.

It belongs to the MetA family.

Its subcellular location is the cytoplasm. It catalyses the reaction L-homoserine + acetyl-CoA = O-acetyl-L-homoserine + CoA. It participates in amino-acid biosynthesis; L-methionine biosynthesis via de novo pathway; O-acetyl-L-homoserine from L-homoserine: step 1/1. Its function is as follows. Transfers an acetyl group from acetyl-CoA to L-homoserine, forming acetyl-L-homoserine. In Methanomethylophilus alvi (strain Mx1201), this protein is Homoserine O-acetyltransferase.